Consider the following 190-residue polypeptide: Flavodoxin-like domain-containing protein BilS (190 aa).

The protein operates within porphyrin-containing compound metabolism; protoheme degradation. In terms of biological role, together with BilR, catalyzes reduction of mesobilirubin and/or bilirubin to urobilinogen, a key step during heme degradation. BilS is probably involved in electron transfer for the bilirubin reductase BilR. The sequence is that of Flavodoxin-like domain-containing protein BilS from Clostridium symbiosum (strain WAL-14163).